Consider the following 264-residue polypeptide: Thiazole synthase (264 aa).

Catalysis depends on Lys-106, which acts as the Schiff-base intermediate with DXP. Residues Gly-167, 193-194 (AG), and 215-216 (NS) contribute to the 1-deoxy-D-xylulose 5-phosphate site.

The protein belongs to the ThiG family. As to quaternary structure, homotetramer. Forms heterodimers with either ThiH or ThiS.

The protein localises to the cytoplasm. The enzyme catalyses [ThiS sulfur-carrier protein]-C-terminal-Gly-aminoethanethioate + 2-iminoacetate + 1-deoxy-D-xylulose 5-phosphate = [ThiS sulfur-carrier protein]-C-terminal Gly-Gly + 2-[(2R,5Z)-2-carboxy-4-methylthiazol-5(2H)-ylidene]ethyl phosphate + 2 H2O + H(+). The protein operates within cofactor biosynthesis; thiamine diphosphate biosynthesis. Functionally, catalyzes the rearrangement of 1-deoxy-D-xylulose 5-phosphate (DXP) to produce the thiazole phosphate moiety of thiamine. Sulfur is provided by the thiocarboxylate moiety of the carrier protein ThiS. In vitro, sulfur can be provided by H(2)S. In Ectopseudomonas mendocina (strain ymp) (Pseudomonas mendocina), this protein is Thiazole synthase.